The sequence spans 469 residues: 3-isopropylmalate dehydratase large subunit (469 aa).

Residues cysteine 349, cysteine 409, and cysteine 412 each contribute to the [4Fe-4S] cluster site. A disordered region spans residues 424–443; the sequence is QISASSSNRNFKGRQGSPSG.

It belongs to the aconitase/IPM isomerase family. LeuC type 1 subfamily. Heterodimer of LeuC and LeuD. It depends on [4Fe-4S] cluster as a cofactor.

The catalysed reaction is (2R,3S)-3-isopropylmalate = (2S)-2-isopropylmalate. It functions in the pathway amino-acid biosynthesis; L-leucine biosynthesis; L-leucine from 3-methyl-2-oxobutanoate: step 2/4. Its function is as follows. Catalyzes the isomerization between 2-isopropylmalate and 3-isopropylmalate, via the formation of 2-isopropylmaleate. This is 3-isopropylmalate dehydratase large subunit from Thermosynechococcus vestitus (strain NIES-2133 / IAM M-273 / BP-1).